A 383-amino-acid polypeptide reads, in one-letter code: Dual-specificity RNA methyltransferase RlmN (383 aa).

E93 acts as the Proton acceptor in catalysis. The Radical SAM core domain occupies 99-339; that stretch reads EETRGTLCVS…TTIRKTRGDD (241 aa). Cysteines 106 and 344 form a disulfide. [4Fe-4S] cluster-binding residues include C113, C117, and C120. S-adenosyl-L-methionine contacts are provided by residues 170–171, S202, 224–226, and N301; these read GE and SLH. C344 (S-methylcysteine intermediate) is an active-site residue.

It belongs to the radical SAM superfamily. RlmN family. Requires [4Fe-4S] cluster as cofactor.

It is found in the cytoplasm. The enzyme catalyses adenosine(2503) in 23S rRNA + 2 reduced [2Fe-2S]-[ferredoxin] + 2 S-adenosyl-L-methionine = 2-methyladenosine(2503) in 23S rRNA + 5'-deoxyadenosine + L-methionine + 2 oxidized [2Fe-2S]-[ferredoxin] + S-adenosyl-L-homocysteine. It carries out the reaction adenosine(37) in tRNA + 2 reduced [2Fe-2S]-[ferredoxin] + 2 S-adenosyl-L-methionine = 2-methyladenosine(37) in tRNA + 5'-deoxyadenosine + L-methionine + 2 oxidized [2Fe-2S]-[ferredoxin] + S-adenosyl-L-homocysteine. Its function is as follows. Specifically methylates position 2 of adenine 2503 in 23S rRNA and position 2 of adenine 37 in tRNAs. m2A2503 modification seems to play a crucial role in the proofreading step occurring at the peptidyl transferase center and thus would serve to optimize ribosomal fidelity. This chain is Dual-specificity RNA methyltransferase RlmN, found in Ralstonia pickettii (strain 12J).